Here is a 178-residue protein sequence, read N- to C-terminus: Endothelin-2 (178 aa).

An N-terminal signal peptide occupies residues 1-26 (MVAMPTAWCSIALALLLALHEGKGQV). A propeptide spanning residues 27–46 (AAAPDQPAPSHRARASHLRP) is cleaved from the precursor. 2 cysteine pairs are disulfide-bonded: Cys-49–Cys-63 and Cys-51–Cys-59. Positions 70–178 (VNTPGQTAPY…RPTHSRRWKR (109 aa)) are excised as a propeptide. Positions 96 to 111 (CECSSGRDPACATFCH) are endothelin-like.

The protein belongs to the endothelin/sarafotoxin family.

The protein localises to the secreted. Endothelins are endothelium-derived vasoconstrictor peptides. The polypeptide is Endothelin-2 (EDN2) (Felis catus (Cat)).